A 266-amino-acid polypeptide reads, in one-letter code: E3 ubiquitin-protein ligase RNF170 (266 aa).

At 1–26 (MEGSVCVDGAAAPAPDEASLIEGVSN) the chain is on the lumenal side. The helical transmembrane segment at 27–47 (AVLLVLVLSVTLLAGLTTLLC) threads the bilayer. The Cytoplasmic portion of the chain corresponds to 48 to 209 (RSEQQRIHPE…GGLFWMFRVR (162 aa)). The RING-type zinc finger occupies 88–131 (CPVCLQQAVLPVETNCGHLFCGSCIIAYWRYGTWLGAISCPICR). A helical membrane pass occupies residues 210–230 (ILLCVCGALAYLVSPLDFLPE). Position 231 (G231) is a topological domain, lumenal. The chain crosses the membrane as a helical span at residues 232-252 (VLGLLGFLDDFFVILLLFIYI). The Cytoplasmic segment spans residues 253 to 266 (SIMYREVVTQRLAG).

As to expression, highly expressed in the developing brain, and less within intersomitic structures of the trunk.

Its subcellular location is the endoplasmic reticulum membrane. It carries out the reaction S-ubiquitinyl-[E2 ubiquitin-conjugating enzyme]-L-cysteine + [acceptor protein]-L-lysine = [E2 ubiquitin-conjugating enzyme]-L-cysteine + N(6)-ubiquitinyl-[acceptor protein]-L-lysine.. It participates in protein modification; protein ubiquitination. In terms of biological role, E3 ubiquitin-protein ligase that plays an essential role in stimulus-induced inositol 1,4,5-trisphosphate receptor (ITPR) ubiquitination and degradation via the endoplasmic reticulum-associated degradation (ERAD) pathway. Also involved in ITPR turnover in resting cells. The sequence is that of E3 ubiquitin-protein ligase RNF170 (rnf170) from Danio rerio (Zebrafish).